A 237-amino-acid chain; its full sequence is Adenosine 5'-phosphosulfate reductase (237 aa).

Positions 123, 124, 206, and 209 each coordinate [4Fe-4S] cluster. Cysteine 232 functions as the Nucleophile; cysteine thiosulfonate intermediate in the catalytic mechanism.

The protein belongs to the PAPS reductase family. CysH subfamily. [4Fe-4S] cluster serves as cofactor.

Its subcellular location is the cytoplasm. The enzyme catalyses [thioredoxin]-disulfide + sulfite + AMP + 2 H(+) = adenosine 5'-phosphosulfate + [thioredoxin]-dithiol. Its pathway is sulfur metabolism; hydrogen sulfide biosynthesis; sulfite from sulfate. In terms of biological role, catalyzes the formation of sulfite from adenosine 5'-phosphosulfate (APS) using thioredoxin as an electron donor. The polypeptide is Adenosine 5'-phosphosulfate reductase (Mycobacteroides abscessus (strain ATCC 19977 / DSM 44196 / CCUG 20993 / CIP 104536 / JCM 13569 / NCTC 13031 / TMC 1543 / L948) (Mycobacterium abscessus)).